A 445-amino-acid chain; its full sequence is Phosphoglucosamine mutase (445 aa).

The Phosphoserine intermediate role is filled by Ser102. Mg(2+)-binding residues include Ser102, Asp240, Asp242, and Asp244. Ser102 bears the Phosphoserine mark.

Belongs to the phosphohexose mutase family. Mg(2+) is required as a cofactor. In terms of processing, activated by phosphorylation.

It carries out the reaction alpha-D-glucosamine 1-phosphate = D-glucosamine 6-phosphate. Its function is as follows. Catalyzes the conversion of glucosamine-6-phosphate to glucosamine-1-phosphate. The sequence is that of Phosphoglucosamine mutase from Mycobacterium sp. (strain JLS).